Consider the following 355-residue polypeptide: D-alanine--D-alanine ligase (355 aa).

Residues K143–D350 enclose the ATP-grasp domain. Residue L178–E233 participates in ATP binding. 3 residues coordinate Mg(2+): D303, E317, and N319.

This sequence belongs to the D-alanine--D-alanine ligase family. It depends on Mg(2+) as a cofactor. Mn(2+) serves as cofactor.

It localises to the cytoplasm. The catalysed reaction is 2 D-alanine + ATP = D-alanyl-D-alanine + ADP + phosphate + H(+). It participates in cell wall biogenesis; peptidoglycan biosynthesis. Its function is as follows. Cell wall formation. The polypeptide is D-alanine--D-alanine ligase (Prochlorococcus marinus (strain MIT 9215)).